The primary structure comprises 264 residues: Flagellar basal-body rod protein FlgG (264 aa).

The protein belongs to the flagella basal body rod proteins family. The basal body constitutes a major portion of the flagellar organelle and consists of four rings (L,P,S, and M) mounted on a central rod. The rod consists of about 26 subunits of FlgG in the distal portion, and FlgB, FlgC and FlgF are thought to build up the proximal portion of the rod with about 6 subunits each.

Its subcellular location is the bacterial flagellum basal body. The sequence is that of Flagellar basal-body rod protein FlgG (flgG) from Bacillus subtilis (strain 168).